A 682-amino-acid polypeptide reads, in one-letter code: Potassium-transporting ATPase ATP-binding subunit (682 aa).

The next 4 helical transmembrane spans lie at 34-54 (PVMFIVWIGSLLTTCISIAMA), 62-82 (ALFSAAISGWLWITVLFANFA), 219-239 (IALTILLIALTIVFLLATATL), and 254-274 (VLVALLVCLIPTTIGGLLSAI). Asp307 acts as the 4-aspartylphosphate intermediate in catalysis. ATP is bound by residues Asp344, Glu348, 377–384 (FTAQSRMS), and Lys395. Asp518 and Asp522 together coordinate Mg(2+). A run of 3 helical transmembrane segments spans residues 588–608 (FAIIPAAFAATYPQLNALNIM), 616–636 (AILSAVIFNALIIVFLIPLAL), and 656–676 (IYGLGGLLVPFIGIKVIDLLL).

It belongs to the cation transport ATPase (P-type) (TC 3.A.3) family. Type IA subfamily. The system is composed of three essential subunits: KdpA, KdpB and KdpC.

The protein resides in the cell inner membrane. It catalyses the reaction K(+)(out) + ATP + H2O = K(+)(in) + ADP + phosphate + H(+). In terms of biological role, part of the high-affinity ATP-driven potassium transport (or Kdp) system, which catalyzes the hydrolysis of ATP coupled with the electrogenic transport of potassium into the cytoplasm. This subunit is responsible for energy coupling to the transport system and for the release of the potassium ions to the cytoplasm. This Escherichia coli O9:H4 (strain HS) protein is Potassium-transporting ATPase ATP-binding subunit.